The sequence spans 201 residues: LIM domain-containing protein PLIM2b (201 aa).

2 consecutive LIM zinc-binding domains span residues 8-68 and 103-163; these read DKCT…LFKE and DKCA…LFME. The tract at residues 171 to 201 is disordered; that stretch reads KKKSESQEVLPEVVPEEQPAPPPPDENREDN. Positions 177 to 187 are enriched in low complexity; that stretch reads QEVLPEVVPEE.

In terms of assembly, interacts with NEK3.

This Oryza sativa subsp. japonica (Rice) protein is LIM domain-containing protein PLIM2b.